A 59-amino-acid chain; its full sequence is Potassium channel toxin alpha-KTx 4.1 (59 aa).

Residues 1-22 form the signal peptide; that stretch reads MKAFYGILIIFILISMIDLSKQ. 3 disulfides stabilise this stretch: cysteine 29–cysteine 50, cysteine 35–cysteine 55, and cysteine 39–cysteine 57. Residues 48-55 form an interaction with Ca(2+)-activated K(+) channels region; that stretch reads GKCMNGKC.

Belongs to the short scorpion toxin superfamily. Potassium channel inhibitor family. Alpha-KTx 04 subfamily. In terms of tissue distribution, expressed by the venom gland.

It is found in the secreted. In terms of biological role, potently blocks Kv1.1/KCNA1 (85%), Kv1.2/KCNA2 (91%), Kv1.3/KCNA3 (89%), Kv1.6/KCNA6 (94%), and Shaker (97%). This Tityus serrulatus (Brazilian scorpion) protein is Potassium channel toxin alpha-KTx 4.1.